Here is a 327-residue protein sequence, read N- to C-terminus: MAAAAAMAEQESARNGGRNRGGVQRVEGKLRASVEKGDYYEAHQMYRTLFFRYMSQSKHTEARELMYSGALLFFSHGQQNSAADLSMLVLESLEKAEVEVADELLENLAKVFSLMDPNSPERVTFVSRALKWSSGGSGKLGHPRLHQLLALTLWKEQNYCESRYHFLHSADGEGCANMLVEYSTSRGFRSEVDMFVAQAVLQFLCLKNKSSASVVFTTYTQKHPSIEDGPPFVEPLLNFIWFLLLAVDGGKLTVFTVLCEQYQPSLRRDPMYNEYLDRIGQLFFGVPPKQTSSYGGLLGNLLTSLMGSSEQEDGEESPSDGSPIELD.

N-acetylalanine is present on alanine 2. Serine 12 carries the phosphoserine modification. The segment at 195–271 (FVAQAVLQFL…YQPSLRRDPM (77 aa)) is interacts with BAG6. The segment at 307–327 (GSSEQEDGEESPSDGSPIELD) is disordered.

Belongs to the GET4 family. Component of the BAG6/BAT3 complex, at least composed of BAG6, UBL4A and GET4/TRC35. Interacts with BAG6; the interaction is direct and localizes BAG6 to the cytosol. Interacts with GET3. Post-translationally, ubiquitinated by RNF12, leading to proteasomal degradation. When unassembled from BAG6; ubiquitinylation is modulated by BAG6 quality control role and effectuated by RNF126.

Its subcellular location is the cytoplasm. It localises to the cytosol. As part of a cytosolic protein quality control complex, the BAG6/BAT3 complex, maintains misfolded and hydrophobic patches-containing proteins in a soluble state and participates in their proper delivery to the endoplasmic reticulum or alternatively can promote their sorting to the proteasome where they undergo degradation. The BAG6/BAT3 complex is involved in the post-translational delivery of tail-anchored/type II transmembrane proteins to the endoplasmic reticulum membrane. Recruited to ribosomes, it interacts with the transmembrane region of newly synthesized tail-anchored proteins and together with SGTA and ASNA1 mediates their delivery to the endoplasmic reticulum. Client proteins that cannot be properly delivered to the endoplasmic reticulum are ubiquitinated and sorted to the proteasome. Similarly, the BAG6/BAT3 complex also functions as a sorting platform for proteins of the secretory pathway that are mislocalized to the cytosol either delivering them to the proteasome for degradation or to the endoplasmic reticulum. The BAG6/BAT3 complex also plays a role in the endoplasmic reticulum-associated degradation (ERAD), a quality control mechanism that eliminates unwanted proteins of the endoplasmic reticulum through their retrotranslocation to the cytosol and their targeting to the proteasome. It maintains these retrotranslocated proteins in an unfolded yet soluble state condition in the cytosol to ensure their proper delivery to the proteasome. The chain is Golgi to ER traffic protein 4 homolog from Homo sapiens (Human).